A 66-amino-acid polypeptide reads, in one-letter code: uncharacterized protein (66 aa).

The next 2 helical transmembrane spans lie at 5 to 25 and 30 to 50; these read ALIVILILLPFVQLALLPLVN and IMFGLPFFHFWLLLWIIVTPL.

The protein resides in the cell membrane. This is an uncharacterized protein from Bacillus subtilis (strain 168).